The primary structure comprises 684 residues: G-protein-signaling modulator 2 (684 aa).

Positions 22 to 357 are important for interaction with NUMA1; INSC and FRMPD1; that stretch reads ASCLELALEG…HLEISREVGD (336 aa). 8 TPR repeats span residues 24-57, 62-95, 102-135, 142-184, 202-235, 242-275, 282-315, and 322-355; these read CLEL…GTED, SAIY…ARTI, AKAS…SREL, ARAL…AVDF, GRAF…AKEF, RRAY…ARQL, AQSC…AQEL, and GRAC…SREV. The residue at position 132 (S132) is a Phosphoserine; by PKG. At S352 the chain carries Phosphoserine; by PKG. 2 positions are modified to phosphoserine: S408 and S483. T486 carries the post-translational modification Phosphothreonine. A GoLoco 1 domain is found at 489 to 511; the sequence is DEGFFDLLSRFQSNRMDDQRCCL. The residue at position 501 (S501) is a Phosphoserine; by PKC. A phosphoserine mark is found at S541 and S565. GoLoco domains lie at 544 to 566, 594 to 616, and 628 to 650; these read TDEF…RASF, DEDF…RCAP, and DEDF…RVLL. The residue at position 607 (S607) is a Phosphoserine; by PKG. GDP contacts are provided by R608, R613, R642, and R647.

It belongs to the GPSM family. As to quaternary structure, interacts with the dynein-dynactin complex; this interaction is inhibited in a PLK1-dependent manner. Part of a spindle orientation complex at least composed of GNAI1, GPSM2 and NUMA1. Interacts with LLGL2. Interacts (via TPR repeat region) with INSC/inscuteable. Interacts (via TPR repeat region) with NUMA1 (via C-terminus); this interaction is direct, inhibited in a PLK1-dependent manner, prevents the binding of NUMA1 with SPAG5 and promotes spindle pole organization. INSC and NUMA1 compete for the same binding site, but INSC has higher affinity and can displace NUMA1 (in vitro). Interacts with GNAI2. Interacts (via GoLoco domains) with the GDP-bound form of GNAI1 and GNAI3; has much lower affinity for the GTP-bound form. Interaction with GDP-bound GNAI3 strongly enhances the affinity for NUMA1. Interacts (via TPR repeat region) with FRMPD1. INSC and FRMPD1 compete for the same binding site, but INSC has higher affinity and can displace FRMPD1 (in vitro). Interacts (via TPR repeat region) with FRMPD4. Identified in a complex with INSC and F2RL2/Par3. Interacts with TASOR. In terms of tissue distribution, ubiquitously expressed.

Its subcellular location is the cytoplasm. The protein localises to the cell cortex. The protein resides in the cytoskeleton. It localises to the spindle pole. It is found in the lateral cell membrane. Plays an important role in mitotic spindle pole organization via its interaction with NUMA1. Required for cortical dynein-dynactin complex recruitment during metaphase. Plays a role in metaphase spindle orientation. Also plays an important role in asymmetric cell divisions. Has guanine nucleotide dissociation inhibitor (GDI) activity towards G(i) alpha proteins, such as GNAI1 and GNAI3, and thereby regulates their activity. The chain is G-protein-signaling modulator 2 (GPSM2) from Homo sapiens (Human).